A 128-amino-acid chain; its full sequence is 14 kDa zinc-binding protein (128 aa).

The HIT domain maps to 18–128; that stretch reads IFDKIIKKEI…GGRQMNWPPG (111 aa). The Histidine triad motif signature appears at 112–116; sequence HIHVH.

As to quaternary structure, homodimer.

This chain is 14 kDa zinc-binding protein (ZBP14), found in Zea mays (Maize).